Here is a 53-residue protein sequence, read N- to C-terminus: Conotoxin Cal6.31 (53 aa).

The N-terminal stretch at Met-1–Ala-24 is a signal peptide. 3 disulfides stabilise this stretch: Cys-29-Cys-43, Cys-36-Cys-47, and Cys-42-Cys-51.

Belongs to the conotoxin O1 superfamily. As to expression, expressed by the venom duct.

The protein resides in the secreted. Probable neurotoxin. The protein is Conotoxin Cal6.31 of Californiconus californicus (California cone).